We begin with the raw amino-acid sequence, 365 residues long: Formamidopyrimidine-DNA glycosylase (365 aa).

The active-site Schiff-base intermediate with DNA is the proline 2. Glutamate 3 acts as the Proton donor in catalysis. Catalysis depends on lysine 61, which acts as the Proton donor; for beta-elimination activity. Residues 121–150 (RGRLAGHGDGMDGTSRTGSTLPGTGGTENS) form a disordered region. Positions 134–150 (TSRTGSTLPGTGGTENS) are enriched in polar residues. Positions 186, 205, and 246 each coordinate DNA. The FPG-type zinc finger occupies 331–365 (RVYGRGGQPCRHCGTTLATAQVAGRTTVFCPQCQR). Arginine 355 acts as the Proton donor; for delta-elimination activity in catalysis.

Belongs to the FPG family. As to quaternary structure, monomer. Zn(2+) serves as cofactor.

The catalysed reaction is Hydrolysis of DNA containing ring-opened 7-methylguanine residues, releasing 2,6-diamino-4-hydroxy-5-(N-methyl)formamidopyrimidine.. It carries out the reaction 2'-deoxyribonucleotide-(2'-deoxyribose 5'-phosphate)-2'-deoxyribonucleotide-DNA = a 3'-end 2'-deoxyribonucleotide-(2,3-dehydro-2,3-deoxyribose 5'-phosphate)-DNA + a 5'-end 5'-phospho-2'-deoxyribonucleoside-DNA + H(+). Involved in base excision repair of DNA damaged by oxidation or by mutagenic agents. Acts as a DNA glycosylase that recognizes and removes damaged bases. Has a preference for oxidized purines, such as 7,8-dihydro-8-oxoguanine (8-oxoG). Has AP (apurinic/apyrimidinic) lyase activity and introduces nicks in the DNA strand. Cleaves the DNA backbone by beta-delta elimination to generate a single-strand break at the site of the removed base with both 3'- and 5'-phosphates. The sequence is that of Formamidopyrimidine-DNA glycosylase from Nitratidesulfovibrio vulgaris (strain ATCC 29579 / DSM 644 / CCUG 34227 / NCIMB 8303 / VKM B-1760 / Hildenborough) (Desulfovibrio vulgaris).